The sequence spans 218 residues: Large ribosomal subunit protein bL25 (218 aa).

The disordered stretch occupies residues 187–218; it reads SATAAVEEAKEDGAPEESAQGQGAAEAQETGK. Residues 202 to 218 are compositionally biased toward low complexity; that stretch reads EESAQGQGAAEAQETGK.

It belongs to the bacterial ribosomal protein bL25 family. CTC subfamily. Part of the 50S ribosomal subunit; part of the 5S rRNA/L5/L18/L25 subcomplex. Contacts the 5S rRNA. Binds to the 5S rRNA independently of L5 and L18.

In terms of biological role, this is one of the proteins that binds to the 5S RNA in the ribosome where it forms part of the central protuberance. The sequence is that of Large ribosomal subunit protein bL25 from Anaplasma marginale (strain Florida).